We begin with the raw amino-acid sequence, 361 residues long: 1-deoxy-D-xylulose 5-phosphate reductoisomerase (361 aa).

Positions 12, 13, 14, 15, 38, and 102 each coordinate NADPH. Residue Lys-103 coordinates 1-deoxy-D-xylulose 5-phosphate. Glu-104 serves as a coordination point for NADPH. Asp-126 contacts Mn(2+). Residues Ser-127, Glu-128, Ser-152, and His-175 each contribute to the 1-deoxy-D-xylulose 5-phosphate site. A Mn(2+)-binding site is contributed by Glu-128. Gly-181 lines the NADPH pocket. Residues Ser-188, Asn-193, Lys-194, and Glu-197 each contribute to the 1-deoxy-D-xylulose 5-phosphate site. Glu-197 is a Mn(2+) binding site.

The protein belongs to the DXR family. The cofactor is Mg(2+). Mn(2+) is required as a cofactor.

It carries out the reaction 2-C-methyl-D-erythritol 4-phosphate + NADP(+) = 1-deoxy-D-xylulose 5-phosphate + NADPH + H(+). It functions in the pathway isoprenoid biosynthesis; isopentenyl diphosphate biosynthesis via DXP pathway; isopentenyl diphosphate from 1-deoxy-D-xylulose 5-phosphate: step 1/6. In terms of biological role, catalyzes the NADPH-dependent rearrangement and reduction of 1-deoxy-D-xylulose-5-phosphate (DXP) to 2-C-methyl-D-erythritol 4-phosphate (MEP). The chain is 1-deoxy-D-xylulose 5-phosphate reductoisomerase from Leifsonia xyli subsp. xyli (strain CTCB07).